A 257-amino-acid chain; its full sequence is NAD-capped RNA hydrolase NudC (257 aa).

Residues Lys-25 and Arg-69 each contribute to the substrate site. Positions 98 and 101 each coordinate Zn(2+). Substrate is bound at residue Glu-111. 2 residues coordinate Zn(2+): Cys-116 and Cys-119. Tyr-124 contributes to the substrate binding site. A Nudix hydrolase domain is found at 125 to 248 (PQIAPCIIVA…TVARRLIEDT (124 aa)). 3 residues coordinate a divalent metal cation: Ala-158, Glu-174, and Glu-178. Positions 159–180 (GFVEVGETLEQAVAREVMEESG) match the Nudix box motif. A substrate-binding site is contributed by 192–199 (QPWPFPQS). Glu-219 is an a divalent metal cation binding site. Residue Ala-241 participates in substrate binding.

The protein belongs to the Nudix hydrolase family. NudC subfamily. As to quaternary structure, homodimer. Mg(2+) is required as a cofactor. Mn(2+) serves as cofactor. The cofactor is Zn(2+).

The catalysed reaction is a 5'-end NAD(+)-phospho-ribonucleoside in mRNA + H2O = a 5'-end phospho-adenosine-phospho-ribonucleoside in mRNA + beta-nicotinamide D-ribonucleotide + 2 H(+). It carries out the reaction NAD(+) + H2O = beta-nicotinamide D-ribonucleotide + AMP + 2 H(+). The enzyme catalyses NADH + H2O = reduced beta-nicotinamide D-ribonucleotide + AMP + 2 H(+). Its function is as follows. mRNA decapping enzyme that specifically removes the nicotinamide adenine dinucleotide (NAD) cap from a subset of mRNAs by hydrolyzing the diphosphate linkage to produce nicotinamide mononucleotide (NMN) and 5' monophosphate mRNA. The NAD-cap is present at the 5'-end of some mRNAs and stabilizes RNA against 5'-processing. Has preference for mRNAs with a 5'-end purine. Catalyzes the hydrolysis of a broad range of dinucleotide pyrophosphates. The protein is NAD-capped RNA hydrolase NudC of Escherichia fergusonii (strain ATCC 35469 / DSM 13698 / CCUG 18766 / IAM 14443 / JCM 21226 / LMG 7866 / NBRC 102419 / NCTC 12128 / CDC 0568-73).